Reading from the N-terminus, the 131-residue chain is Peptide methionine sulfoxide reductase MsrB (131 aa).

In terms of domain architecture, MsrB spans 8-130 (LDEWRSMLDP…NSVCIDLRPR (123 aa)). Zn(2+) contacts are provided by C47, C50, C96, and C99. C119 serves as the catalytic Nucleophile.

This sequence belongs to the MsrB Met sulfoxide reductase family. Zn(2+) serves as cofactor.

The catalysed reaction is L-methionyl-[protein] + [thioredoxin]-disulfide + H2O = L-methionyl-(R)-S-oxide-[protein] + [thioredoxin]-dithiol. In Pseudomonas putida (strain ATCC 47054 / DSM 6125 / CFBP 8728 / NCIMB 11950 / KT2440), this protein is Peptide methionine sulfoxide reductase MsrB.